Reading from the N-terminus, the 575-residue chain is 2-isopropylmalate synthase (575 aa).

Residues 40-314 (PRWCAVDLRD…DPQIDFSDID (275 aa)) enclose the Pyruvate carboxyltransferase domain. Positions 49, 253, 255, and 289 each coordinate Mg(2+). The regulatory domain stretch occupies residues 456–575 (SGSGTPEWGR…IVSAVNRALR (120 aa)).

Belongs to the alpha-IPM synthase/homocitrate synthase family. LeuA type 2 subfamily. Homodimer. It depends on Mg(2+) as a cofactor.

The protein resides in the cytoplasm. It catalyses the reaction 3-methyl-2-oxobutanoate + acetyl-CoA + H2O = (2S)-2-isopropylmalate + CoA + H(+). Its pathway is amino-acid biosynthesis; L-leucine biosynthesis; L-leucine from 3-methyl-2-oxobutanoate: step 1/4. Functionally, catalyzes the condensation of the acetyl group of acetyl-CoA with 3-methyl-2-oxobutanoate (2-ketoisovalerate) to form 3-carboxy-3-hydroxy-4-methylpentanoate (2-isopropylmalate). The protein is 2-isopropylmalate synthase of Kineococcus radiotolerans (strain ATCC BAA-149 / DSM 14245 / SRS30216).